The chain runs to 177 residues: Ribosome maturation factor RimM (177 aa).

In terms of domain architecture, PRC barrel spans 104–177; that stretch reads GVDGIWADLI…IIKVKLMEGM (74 aa).

It belongs to the RimM family. In terms of assembly, binds ribosomal protein uS19.

The protein resides in the cytoplasm. Functionally, an accessory protein needed during the final step in the assembly of 30S ribosomal subunit, possibly for assembly of the head region. Essential for efficient processing of 16S rRNA. May be needed both before and after RbfA during the maturation of 16S rRNA. It has affinity for free ribosomal 30S subunits but not for 70S ribosomes. This chain is Ribosome maturation factor RimM, found in Magnetococcus marinus (strain ATCC BAA-1437 / JCM 17883 / MC-1).